The chain runs to 354 residues: NADH-quinone oxidoreductase subunit H (354 aa).

8 helical membrane passes run 22-42 (ILIR…YLIL), 91-111 (YLIA…VIPF), 124-144 (LLYV…AGWA), 168-188 (MGFA…SAIV), 203-223 (ILSW…ISGV), 255-275 (LFFL…ALMF), 291-311 (IPGF…FIWI), and 326-346 (LGWK…AIWI).

The protein belongs to the complex I subunit 1 family. In terms of assembly, NDH-1 is composed of 14 different subunits. Subunits NuoA, H, J, K, L, M, N constitute the membrane sector of the complex.

It is found in the cell inner membrane. The catalysed reaction is a quinone + NADH + 5 H(+)(in) = a quinol + NAD(+) + 4 H(+)(out). In terms of biological role, NDH-1 shuttles electrons from NADH, via FMN and iron-sulfur (Fe-S) centers, to quinones in the respiratory chain. The immediate electron acceptor for the enzyme in this species is believed to be ubiquinone. Couples the redox reaction to proton translocation (for every two electrons transferred, four hydrogen ions are translocated across the cytoplasmic membrane), and thus conserves the redox energy in a proton gradient. This subunit may bind ubiquinone. The chain is NADH-quinone oxidoreductase subunit H from Cupriavidus taiwanensis (strain DSM 17343 / BCRC 17206 / CCUG 44338 / CIP 107171 / LMG 19424 / R1) (Ralstonia taiwanensis (strain LMG 19424)).